A 167-amino-acid chain; its full sequence is MLLQKTLCIVKPDGVRRGLIGDVVSRFERVGLKMVAAKMLIVDESLAKKHYLYDDIVFRHSEAVWNSLIKFISNSPVFTFVVEGVESIEVVRKLCGATEPKLAIPGTIRGDFSYHSFKYSNEKGFSIYNVIHASANEADAMREIPIWFKDNEILNYKRDDECEHYYC.

Residues K11, R92, T98, R109, and N129 each contribute to the ATP site. H132 functions as the Pros-phosphohistidine intermediate in the catalytic mechanism.

It belongs to the NDK family. Homotetramer. It depends on Mg(2+) as a cofactor.

It is found in the cytoplasm. The catalysed reaction is a 2'-deoxyribonucleoside 5'-diphosphate + ATP = a 2'-deoxyribonucleoside 5'-triphosphate + ADP. It carries out the reaction a ribonucleoside 5'-diphosphate + ATP = a ribonucleoside 5'-triphosphate + ADP. Its function is as follows. Major role in the synthesis of nucleoside triphosphates other than ATP. The ATP gamma phosphate is transferred to the NDP beta phosphate via a ping-pong mechanism, using a phosphorylated active-site intermediate. This Borreliella burgdorferi (strain ATCC 35210 / DSM 4680 / CIP 102532 / B31) (Borrelia burgdorferi) protein is Nucleoside diphosphate kinase (ndk).